The primary structure comprises 523 residues: Flavonoid 3',5'-hydroxylase (523 aa).

Heme is bound at residue Cys460.

This sequence belongs to the cytochrome P450 family. It depends on heme as a cofactor.

The catalysed reaction is a 3',5'-unsubstituted flavanone + 2 reduced [NADPH--hemoprotein reductase] + 2 O2 = a 3',5'-dihydroxyflavanone + 2 oxidized [NADPH--hemoprotein reductase] + 2 H2O + 2 H(+). Its pathway is pigment biosynthesis; anthocyanin biosynthesis. Catalyzes the 3'5'-hydroxylation of naringenin and eriodictyol to form 5,7,3,'4',5'-pentahydroxyflavanone and 3',5'-hydroxylation of dihydrokaempferol and dihydroquercetin to form dihydromyricetin. The polypeptide is Flavonoid 3',5'-hydroxylase (CYP75A6) (Campanula medium (Canterbury bells)).